We begin with the raw amino-acid sequence, 202 residues long: Nucleoside triphosphate pyrophosphatase (202 aa).

The active-site Proton acceptor is Asp79.

Belongs to the Maf family. Requires a divalent metal cation as cofactor.

The protein localises to the cytoplasm. It carries out the reaction a ribonucleoside 5'-triphosphate + H2O = a ribonucleoside 5'-phosphate + diphosphate + H(+). The catalysed reaction is a 2'-deoxyribonucleoside 5'-triphosphate + H2O = a 2'-deoxyribonucleoside 5'-phosphate + diphosphate + H(+). Functionally, nucleoside triphosphate pyrophosphatase. May have a dual role in cell division arrest and in preventing the incorporation of modified nucleotides into cellular nucleic acids. In Rhodospirillum rubrum (strain ATCC 11170 / ATH 1.1.1 / DSM 467 / LMG 4362 / NCIMB 8255 / S1), this protein is Nucleoside triphosphate pyrophosphatase.